Reading from the N-terminus, the 132-residue chain is Small ribosomal subunit protein uS8 (132 aa).

It belongs to the universal ribosomal protein uS8 family. Part of the 30S ribosomal subunit. Contacts proteins S5 and S12.

In terms of biological role, one of the primary rRNA binding proteins, it binds directly to 16S rRNA central domain where it helps coordinate assembly of the platform of the 30S subunit. The sequence is that of Small ribosomal subunit protein uS8 from Listeria innocua serovar 6a (strain ATCC BAA-680 / CLIP 11262).